A 274-amino-acid polypeptide reads, in one-letter code: 2-dehydro-3-deoxyphosphooctonate aldolase (274 aa).

Belongs to the KdsA family.

It is found in the cytoplasm. It catalyses the reaction D-arabinose 5-phosphate + phosphoenolpyruvate + H2O = 3-deoxy-alpha-D-manno-2-octulosonate-8-phosphate + phosphate. It participates in carbohydrate biosynthesis; 3-deoxy-D-manno-octulosonate biosynthesis; 3-deoxy-D-manno-octulosonate from D-ribulose 5-phosphate: step 2/3. Its pathway is bacterial outer membrane biogenesis; lipopolysaccharide biosynthesis. This chain is 2-dehydro-3-deoxyphosphooctonate aldolase, found in Rickettsia felis (strain ATCC VR-1525 / URRWXCal2) (Rickettsia azadi).